Consider the following 49-residue polypeptide: uncharacterized protein (49 aa).

This is an uncharacterized protein from Sulfolobus spindle-shape virus 1 (SSV1).